The sequence spans 537 residues: Chaperonin GroEL 1 (537 aa).

Residues 29–32 (TLGP), 86–90 (DGTTT), Gly-413, 478–480 (NAA), and Asp-494 contribute to the ATP site.

It belongs to the chaperonin (HSP60) family. In terms of assembly, forms a cylinder of 14 subunits composed of two heptameric rings stacked back-to-back. Interacts with the co-chaperonin GroES.

The protein resides in the cytoplasm. It catalyses the reaction ATP + H2O + a folded polypeptide = ADP + phosphate + an unfolded polypeptide.. In terms of biological role, together with its co-chaperonin GroES, plays an essential role in assisting protein folding. The GroEL-GroES system forms a nano-cage that allows encapsulation of the non-native substrate proteins and provides a physical environment optimized to promote and accelerate protein folding. This is Chaperonin GroEL 1 from Corynebacterium efficiens (strain DSM 44549 / YS-314 / AJ 12310 / JCM 11189 / NBRC 100395).